The sequence spans 450 residues: 3-phosphoshikimate 1-carboxyvinyltransferase (450 aa).

Residues methionine 1–glycine 26 are disordered. Residues lysine 28, serine 29, and arginine 33 each coordinate 3-phosphoshikimate. Residue lysine 28 coordinates phosphoenolpyruvate. Phosphoenolpyruvate contacts are provided by glycine 101 and arginine 129. Residues serine 174, glutamine 176, aspartate 327, and lysine 354 each coordinate 3-phosphoshikimate. A phosphoenolpyruvate-binding site is contributed by glutamine 176. The active-site Proton acceptor is aspartate 327. Residues arginine 358 and arginine 403 each coordinate phosphoenolpyruvate.

The protein belongs to the EPSP synthase family. Monomer.

The protein resides in the cytoplasm. The catalysed reaction is 3-phosphoshikimate + phosphoenolpyruvate = 5-O-(1-carboxyvinyl)-3-phosphoshikimate + phosphate. Its pathway is metabolic intermediate biosynthesis; chorismate biosynthesis; chorismate from D-erythrose 4-phosphate and phosphoenolpyruvate: step 6/7. In terms of biological role, catalyzes the transfer of the enolpyruvyl moiety of phosphoenolpyruvate (PEP) to the 5-hydroxyl of shikimate-3-phosphate (S3P) to produce enolpyruvyl shikimate-3-phosphate and inorganic phosphate. The polypeptide is 3-phosphoshikimate 1-carboxyvinyltransferase (Dinoroseobacter shibae (strain DSM 16493 / NCIMB 14021 / DFL 12)).